Reading from the N-terminus, the 931-residue chain is MRKGLRATAARCGLGLGYLLQMLVLPALALLSASGTGSAAQDDEFFHELPETFPSDPPEPLPHFLIEPEEAYIVKNKPVNLYCKASPATQIYFKCNSEWVHQKDHVVDERVDETSGLIVREVSIEISRQQVEELFGPEDYWCQCVAWSSAGTTKSRKAYVRIAYLRKTFEQEPLGKEVSLEQEVLLQCRPPEGIPVAEVEWLKNEDIIDPAEDRNFYITIDHNLIIKQARLSDTANYTCVAKNIVAKRKSTTATVIVYVNGGWSTWTEWSVCNSRCGRGYQKRTRTCTNPAPLNGGAFCEGQSVQKIACTTLCPVDGRWTSWSKWSTCGTECTHWRRRECTAPAPKNGGKDCDGLVLQSKNCTDGLCMQAAPDSDDVALYVGIVIAVTVCLAITVVVALFVYRKNHRDFESDIIDSSALNGGFQPVNIKAARQDLLAVPPDLTSAAAMYRGPVYALHDVSDKIPMTNSPILDPLPNLKIKVYNSSGAVTPQDDLAEFSSKLSPQMTQSLLENEALNLKNQSLARQTDPSCTAFGTFNSLGGHLIIPNSGVSLLIPAGAIPQGRVYEMYVTVHRKENMRPPMEDSQTLLTPVVSCGPPGALLTRPVILTLHHCADPSTEDWKIQLKNQAVQGQWEDVVVVGEENFTTPCYIQLDAEACHILTENLSTYALVGQSTTKAAAKRLKLAIFGPLCCSSLEYSIRVYCLDDTQDALKEVLQLERQMGGQLLEEPKALHFKGSIHNLRLSIHDIAHSLWKSKLLAKYQEIPFYHIWSGSQRNLHCTFTLERLSLNTVELVCKLCVRQVEGEGQIFQLNCTVSEEPTGIDLPLLDPASTITTVTGPSAFSIPLPIRQKLCSSLDAPQTRGHDWRMLAHKLNLDRYLNYFATKSSPTGVILDLWEAQNFPDGNLSMLAAVLEEMGRHETVVSLAAEGQY.

The first 40 residues, 1 to 40 (MRKGLRATAARCGLGLGYLLQMLVLPALALLSASGTGSAA), serve as a signal peptide directing secretion. Over 41 to 380 (QDDEFFHELP…APDSDDVALY (340 aa)) the chain is Extracellular. The Ig-like domain occupies 62–159 (PHFLIEPEEA…AGTTKSRKAY (98 aa)). Intrachain disulfides connect Cys83–Cys144, Cys95–Cys142, Cys188–Cys239, Cys272–Cys309, Cys276–Cys313, Cys287–Cys299, Cys328–Cys362, Cys332–Cys367, and Cys340–Cys352. The region spanning 161 to 256 (RIAYLRKTFE…KRKSTTATVI (96 aa)) is the Ig-like C2-type domain. Asn236 carries N-linked (GlcNAc...) asparagine glycosylation. TSP type-1 domains are found at residues 260-314 (NGGW…TLCP) and 316-368 (DGRW…GLCM). The N-linked (GlcNAc...) asparagine glycan is linked to Asn361. A helical transmembrane segment spans residues 381 to 401 (VGIVIAVTVCLAITVVVALFV). The Cytoplasmic segment spans residues 402–931 (YRKNHRDFES…VVSLAAEGQY (530 aa)). The interval 402–931 (YRKNHRDFES…VVSLAAEGQY (530 aa)) is required for netrin-mediated axon repulsion of neuronal growth cones. The residue at position 502 (Ser502) is a Phosphoserine. Residues 530-673 (CTAFGTFNSL…LSTYALVGQS (144 aa)) form the ZU5 domain. Tyr568 is modified (phosphotyrosine). Positions 694–712 (SLEYSIRVYCLDDTQDALK) are interaction with DCC. The region spanning 850–929 (QKLCSSLDAP…ETVVSLAAEG (80 aa)) is the Death domain.

The protein belongs to the unc-5 family. Interacts with DCC (via cytoplasmic domain). Interacts (tyrosine phosphorylated form) with PTPN11. Interacts (via extracellular domain) with FLRT3 (via extracellular domain). Interacts (via Ig-like C2-type domain) with DSCAM (via extracellular domain). Interacts (via death domain) with DAPK1. Interacts (via cytoplasmic domain) with TUBB3; this interaction is decreased by NTN1/Netrin-1. In terms of processing, phosphorylated on different cytoplasmic tyrosine residues. Phosphorylation of Tyr-568 leads to an interaction with PTPN11 phosphatase, suggesting that its activity is regulated by phosphorylation/dephosphorylation. Tyrosine phosphorylation is netrin-dependent. Post-translationally, proteolytically cleaved by caspases during apoptosis. The cleavage does not take place when the receptor is associated with netrin ligand. Its cleavage by caspases is required to induce apoptosis. In terms of tissue distribution, expressed in cortical and cerebellar neurons, including cells of the external and internal granular layer and of the Purkinje cell layer (at protein level). Mainly expressed in regions of differentiating neurons. Highly expressed in brain and lung. Expressed in the cerebellum and the neurons of the hippocampus, with enrichment in neurons of the CA3 hippocampal pyramidal layer. Weakly expressed in testis, ovary, spleen, thymus and bladder. Expressed at very low level in kidney, intestine and salivary gland.

It is found in the cell membrane. The protein localises to the cell surface. Its subcellular location is the synapse. It localises to the synaptosome. The protein resides in the cell projection. It is found in the dendrite. The protein localises to the axon. Its subcellular location is the growth cone. It localises to the lamellipodium. The protein resides in the filopodium. Its function is as follows. Receptor for netrin required for axon guidance. Mediates axon repulsion of neuronal growth cones in the developing nervous system upon ligand binding. NTN1/Netrin-1 binding might cause dissociation of UNC5C from polymerized TUBB3 in microtubules and thereby lead to increased microtubule dynamics and axon repulsion. Axon repulsion in growth cones may also be caused by its association with DCC that may trigger signaling for repulsion. Might also collaborate with DSCAM in NTN1-mediated axon repulsion independently of DCC. Also involved in corticospinal tract axon guidance independently of DCC. Involved in dorsal root ganglion axon projection towards the spinal cord. It also acts as a dependence receptor required for apoptosis induction when not associated with netrin ligand. The chain is Netrin receptor UNC5C (Unc5c) from Mus musculus (Mouse).